A 222-amino-acid chain; its full sequence is UPF0502 protein Lcho_2066 (222 aa).

This sequence belongs to the UPF0502 family.

This Leptothrix cholodnii (strain ATCC 51168 / LMG 8142 / SP-6) (Leptothrix discophora (strain SP-6)) protein is UPF0502 protein Lcho_2066.